Here is a 230-residue protein sequence, read N- to C-terminus: Urease accessory protein UreE (230 aa).

Composition is skewed to basic and acidic residues over residues His182–His193 and Ser204–His230. The interval His182 to His230 is disordered.

It belongs to the UreE family.

It localises to the cytoplasm. Functionally, involved in urease metallocenter assembly. Binds nickel. Probably functions as a nickel donor during metallocenter assembly. This chain is Urease accessory protein UreE, found in Yersinia mollaretii.